The sequence spans 496 residues: Gasdermin-E (496 aa).

The membrane targeting domain stretch occupies residues 1–56 (MFAKATRNFLREVDADGDLIAVSNLNDSDKLQLLSLVTKKKRFWCWQRPKYQFLSL). Position 45 is an S-(2-succinyl)cysteine (C45). A Glycyl lysine isopeptide (Lys-Gly) (interchain with G-Cter in ubiquitin) cross-link involves residue K120. C156, C168, and C180 each carry S-(2-succinyl)cysteine. K189 participates in a covalent cross-link: Glycyl lysine isopeptide (Lys-Gly) (interchain with G-Cter in ubiquitin). S-(2-succinyl)cysteine is present on residues C235, C371, C408, C417, and C489.

The protein belongs to the gasdermin family. As to quaternary structure, homooligomer; homooligomeric ring-shaped pore complex containing 27-28 subunits when inserted in the membrane. Post-translationally, cleavage at Asp-270 by CASP3 (mature and uncleaved precursor forms) or granzyme B (GZMB) relieves autoinhibition and is sufficient to initiate pyroptosis. In terms of processing, succination by the Krebs cycle intermediate fumarate, which leads to S-(2-succinyl)cysteine residues, inhibits processing by caspases, and ability to initiate pyroptosis. Succination modification is catalyzed by a non-enzymatic reaction caused by an accumulation of fumarate. Ubiquitinated at Lys-120 and Lys-189 via 'Lys-48'-linked polyubiquitin chains, leading to proteasomal degradation. Deubiquitinated by USP48, leading to increased stability. Post-translationally, palmitoylated. As to expression, expressed in cochlea. Low level of expression in heart, brain, placenta, lung, liver, skeletal muscle, kidney and pancreas, with highest expression in placenta.

The protein resides in the cell membrane. It localises to the cytoplasm. Its subcellular location is the cytosol. The full-length protein before cleavage is inactive: intramolecular interactions between N- and C-terminal domains mediate autoinhibition in the absence of activation signal. The intrinsic pyroptosis-inducing activity is carried by the released N-terminal moiety (Gasdermin-E, N-terminal) following cleavage by CASP3 or granzyme B (GZMB). Activated by NLRP1 in the absence of GSDMD expression: NLRP1 cleaves and activates CASP8, promoting downstream activation of CASP3 and subsequent activation of GSDME. Its activity is regulated as follows. (Microbial infection) Activated upon human coronavirus SARS-CoV-2 infection, leading to lung epithelial cell death. Activation takes place in response to (1) activation of NLRP1 and (2) inactivation of GSDMD following NLRP1 and GSDMD cleavage by the SARS-CoV-2 3C-like proteinase nsp5. In terms of biological role, precursor of a pore-forming protein that converts non-inflammatory apoptosis to pyroptosis. This form constitutes the precursor of the pore-forming protein: upon cleavage, the released N-terminal moiety (Gasdermin-E, N-terminal) binds to membranes and forms pores, triggering pyroptosis. Functionally, pore-forming protein produced by cleavage by CASP3 or granzyme B (GZMB), which converts non-inflammatory apoptosis to pyroptosis or promotes granzyme-mediated pyroptosis, respectively. After cleavage, moves to the plasma membrane, homooligomerizes within the membrane and forms pores of 10-15 nanometers (nm) of inner diameter, allowing the release of mature interleukins (IL1B and IL16) and triggering pyroptosis. Binds to inner leaflet lipids, bisphosphorylated phosphatidylinositols, such as phosphatidylinositol (4,5)-bisphosphate. Cleavage by CASP3 switches CASP3-mediated apoptosis induced by TNF or danger signals, such as chemotherapy drugs, to pyroptosis. Mediates secondary necrosis downstream of the mitochondrial apoptotic pathway and CASP3 activation as well as in response to viral agents. Exhibits bactericidal activity. Cleavage by GZMB promotes tumor suppressor activity by triggering robust anti-tumor immunity. Suppresses tumors by mediating granzyme-mediated pyroptosis in target cells of natural killer (NK) cells: cleavage by granzyme B (GZMB), delivered to target cells from NK-cells, triggers pyroptosis of tumor cells and tumor suppression. May play a role in the p53/TP53-regulated cellular response to DNA damage. (Microbial infection) Pore-forming protein, which promotes maternal placental pyroptosis in response to Zika virus infection, contributing to adverse fetal outcomes. In Homo sapiens (Human), this protein is Gasdermin-E.